A 204-amino-acid polypeptide reads, in one-letter code: Protein GrpE (204 aa).

2 stretches are compositionally biased toward basic and acidic residues: residues 1 to 21 and 36 to 46; these read MEELEKDKIERNEEMSEEVKG and EEKIETEVEQK. The interval 1–46 is disordered; it reads MEELEKDKIERNEEMSEEVKGEGPPSELEQSEEVVEEKIETEVEQK.

Belongs to the GrpE family. In terms of assembly, homodimer.

It localises to the cytoplasm. Participates actively in the response to hyperosmotic and heat shock by preventing the aggregation of stress-denatured proteins, in association with DnaK and GrpE. It is the nucleotide exchange factor for DnaK and may function as a thermosensor. Unfolded proteins bind initially to DnaJ; upon interaction with the DnaJ-bound protein, DnaK hydrolyzes its bound ATP, resulting in the formation of a stable complex. GrpE releases ADP from DnaK; ATP binding to DnaK triggers the release of the substrate protein, thus completing the reaction cycle. Several rounds of ATP-dependent interactions between DnaJ, DnaK and GrpE are required for fully efficient folding. This is Protein GrpE from Caldanaerobacter subterraneus subsp. tengcongensis (strain DSM 15242 / JCM 11007 / NBRC 100824 / MB4) (Thermoanaerobacter tengcongensis).